A 110-amino-acid polypeptide reads, in one-letter code: Ribonuclease P protein component 1 (110 aa).

This sequence belongs to the eukaryotic/archaeal RNase P protein component 1 family. As to quaternary structure, consists of a catalytic RNA component and at least 4-5 protein subunits.

Its subcellular location is the cytoplasm. The enzyme catalyses Endonucleolytic cleavage of RNA, removing 5'-extranucleotides from tRNA precursor.. Functionally, part of ribonuclease P, a protein complex that generates mature tRNA molecules by cleaving their 5'-ends. This Methanosarcina barkeri (strain Fusaro / DSM 804) protein is Ribonuclease P protein component 1.